The chain runs to 150 residues: UPF0506 protein SJCHGC02381 (150 aa).

An N-terminal signal peptide occupies residues 1-18 (MNTCIQLLILCLVTVINS). Residues Asn20, Asn24, Asn32, Asn36, Asn48, Asn52, Asn64, and Asn110 are each glycosylated (N-linked (GlcNAc...) asparagine). The tract at residues 22 to 49 (TDNSTENTIKNETENATETELPETFENE) is disordered. The segment covering 36-49 (NATETELPETFENE) has biased composition (acidic residues). Disulfide bonds link Cys116-Cys130, Cys123-Cys134, and Cys129-Cys139.

It belongs to the UPF0506 family.

It localises to the secreted. This is UPF0506 protein SJCHGC02381 from Schistosoma japonicum (Blood fluke).